We begin with the raw amino-acid sequence, 576 residues long: uncharacterized protein (576 aa).

A signal peptide spans 1 to 28 (MLRLNGLRVLLRTLAAIGALLTTASASA). Residue Ser-185 is the Acyl-ester intermediate of the active site. 2 disulfide bridges follow: Cys-252-Cys-269 and Cys-278-Cys-286. Residues Asp-253, Asp-256, Asp-260, and Val-262 each coordinate Ca(2+). Catalysis depends on charge relay system residues Asp-414 and His-464. Cys-529 and Cys-551 are disulfide-bonded.

Belongs to the tannase family.

This is an uncharacterized protein from Xanthomonas campestris pv. campestris (strain ATCC 33913 / DSM 3586 / NCPPB 528 / LMG 568 / P 25).